The sequence spans 167 residues: Ribosome maturation factor RimP (167 aa).

Belongs to the RimP family.

The protein resides in the cytoplasm. In terms of biological role, required for maturation of 30S ribosomal subunits. The chain is Ribosome maturation factor RimP from Cytophaga hutchinsonii (strain ATCC 33406 / DSM 1761 / CIP 103989 / NBRC 15051 / NCIMB 9469 / D465).